Here is a 975-residue protein sequence, read N- to C-terminus: Nesprin-3 (975 aa).

Topologically, residues 1-925 (MTQQPQEDFE…PCSLLQKACR (925 aa)) are cytoplasmic. Spectrin repeat units lie at residues 220–325 (QDHE…RLRG) and 647–740 (REHC…QALR). A disordered region spans residues 778 to 798 (LINPQDPIPRRQHGANPLEGH). The region spanning 917–975 (CSLLQKACRVALPLQLLLLLFLLLLFLLPAGEEERSCALANNFARSFALMLRYNGPPPT) is the KASH domain. A helical; Anchor for type IV membrane protein membrane pass occupies residues 926–946 (VALPLQLLLLLFLLLLFLLPA). Residues 947–975 (GEEERSCALANNFARSFALMLRYNGPPPT) lie on the Perinuclear space side of the membrane.

This sequence belongs to the nesprin family. As to quaternary structure, core component of LINC complexes which are composed of inner nuclear membrane SUN domain-containing proteins coupled to outer nuclear membrane KASH domain-containing nesprins. SUN and KASH domain-containing proteins seem to bind each other promiscuously; however, differentially expression of LINC complex constituents can give rise to specific assemblies. Interacts with SUN1 and SUN2; probably forming respective LINC complexes. Interacts with PLEC (via actin-binding domain). Interacts with DST. Interacts with SYNE1. Interacts (via KASH domain) with TOR1A (ATP-bound); the interaction is required for SYNE3 nuclear envelope localization. The disulfid bond with SUN1 or SUN2 is required for stability of the respective LINC complex under tensile forces. In terms of tissue distribution, ubiquitous.

The protein resides in the nucleus outer membrane. It localises to the nucleus envelope. The protein localises to the rough endoplasmic reticulum. Its function is as follows. As a component of the LINC (LInker of Nucleoskeleton and Cytoskeleton) complex involved in the connection between the nuclear lamina and the cytoskeleton. The nucleocytoplasmic interactions established by the LINC complex play an important role in the transmission of mechanical forces across the nuclear envelope and in nuclear movement and positioning. Probable anchoring protein which tethers the nucleus to the cytoskeleton by binding PLEC which can associate with the intermediate filament system. Plays a role in the regulation of aortic epithelial cell morphology, and is required for flow-induced centrosome polarization and directional migration in aortic endothelial cells. This is Nesprin-3 (Syne3) from Mus musculus (Mouse).